We begin with the raw amino-acid sequence, 194 residues long: Probable RNA polymerase sigma factor HI_1459 (194 aa).

The short motif at 45 to 58 (DLVQEAFLSAFKNL) is the Polymerase core binding element. The segment at residues 161–180 (SEEICQETHLTSSNLHTTLY) is a DNA-binding region (H-T-H motif).

The protein belongs to the sigma-70 factor family. ECF subfamily.

The sequence is that of Probable RNA polymerase sigma factor HI_1459 from Haemophilus influenzae (strain ATCC 51907 / DSM 11121 / KW20 / Rd).